Reading from the N-terminus, the 811-residue chain is MAPLLFLPILQLLLLYCTKSAQAQLNISIGSSLTPQGINNSWISPTADFAFGFLAVDGNSSSYLLAVWFNKIADKTVIWYAKTSSNRQDDTIPIQVQAGSILKLADGALSLRDPSGNEVWNPRVTDVGYARMLDTGNFRLLGTDGATKWESFGDPSDTILPTQVLPLGTALHSRLLATDYSNGRFQLNVQDDGNLVLYLVAVPSAYYHDPYWASNTVGNGSQLVFNETGRIYFTLTNGSQINITSAGVDSMGDFFHRATLDTDGVFRQYIYPKSKQARSLWQEQWRAVDALPENICQTIQTKVGSGACGFNSYCTFDGTKNTTNCLCPQRYKFFDNERTYKGCRPDFEPQSCDLDETAAMVQYEMTPIDRINWPLSDYEQYSPIDETECRRLCVIDCFCSVAVFNKPSNTCYKKKLPLSNGNMDSSLQATVLLKVPRSTNSPSMISSGSSKWKKDKKYWILGSSLFFGSSVLVNFLLIFVLLFGTYCSITSRKKTQLSQLPSNSGLPSKIFTYRELEKATGGFHEVLGTGASGIVYKGQLQDECGTNIAVKKIEKLQQEAQKEFLVEVQTIGQTFHRNLVRLLGFCNEGTEKLLVYEFMSNGSLNTFLFNDSHPHWSLRVQVALGVSRGLFYLHEECNKQIIHCDMKPQNILLDDNFVAKISDFGLAKLLPVNQTQTNTGIRGTRGYVAPEWFKNIGITSKVDVYSFGVILLELVCCRKNVELEVADEEQTILTYWANDCYRCGRIDLLVASDDEAIFNIKKVERFVAVALWCLQEEPSMRPTMHKVMQMLDGAVQIPTPPDPSSYISSLA.

The N-terminal stretch at 1-23 (MAPLLFLPILQLLLLYCTKSAQA) is a signal peptide. One can recognise a Bulb-type lectin domain in the interval 24–153 (QLNISIGSSL…DGATKWESFG (130 aa)). At 24–464 (QLNISIGSSL…DKKYWILGSS (441 aa)) the chain is on the extracellular side. Asn-26, Asn-39, Asn-59, Asn-219, Asn-226, Asn-237, and Asn-242 each carry an N-linked (GlcNAc...) asparagine glycan. Positions 292–344 (PENICQTIQTKVGSGACGFNSYCTFDGTKNTTNCLCPQRYKFFDNERTYKGCR) constitute an EGF-like; atypical domain. Disulfide bonds link Cys-296–Cys-314, Cys-308–Cys-325, Cys-327–Cys-343, Cys-389–Cys-411, and Cys-393–Cys-399. Residue Asn-321 is glycosylated (N-linked (GlcNAc...) asparagine). In terms of domain architecture, PAN spans 352 to 436 (CDLDETAAMV…LQATVLLKVP (85 aa)). A helical transmembrane segment spans residues 465–485 (LFFGSSVLVNFLLIFVLLFGT). The Cytoplasmic segment spans residues 486–811 (YCSITSRKKT…DPSSYISSLA (326 aa)). A Protein kinase domain is found at 521 to 795 (GGFHEVLGTG…KVMQMLDGAV (275 aa)). ATP is bound by residues 527-535 (LGTGASGIV) and Lys-551. Asp-645 acts as the Proton acceptor in catalysis.

The protein belongs to the protein kinase superfamily. Ser/Thr protein kinase family.

It localises to the membrane. It catalyses the reaction L-seryl-[protein] + ATP = O-phospho-L-seryl-[protein] + ADP + H(+). It carries out the reaction L-threonyl-[protein] + ATP = O-phospho-L-threonyl-[protein] + ADP + H(+). In terms of biological role, involved in resistance against the herbivorous insect brown planthopper (N.lugens, BPH). Member of the BPH3 (BPH resistance locus 3) cluster which contains LECRK1, LECRK2 and LECRK3. This chain is G-type lectin S-receptor-like serine/threonine-protein kinase LECRK2, found in Oryza sativa subsp. japonica (Rice).